The sequence spans 56 residues: Small ribosomal subunit protein uS14 (56 aa).

Zn(2+)-binding residues include Cys-21, Cys-24, Cys-39, and Cys-42.

This sequence belongs to the universal ribosomal protein uS14 family. Component of the small ribosomal subunit. Mature ribosomes consist of a small (40S) and a large (60S) subunit. The 40S subunit contains about 32 different proteins and 1 molecule of RNA (18S). The 60S subunit contains 45 different proteins and 3 molecules of RNA (25S, 5.8S and 5S). Zn(2+) is required as a cofactor.

Its subcellular location is the cytoplasm. Functionally, component of the ribosome, a large ribonucleoprotein complex responsible for the synthesis of proteins in the cell. The small ribosomal subunit (SSU) binds messenger RNAs (mRNAs) and translates the encoded message by selecting cognate aminoacyl-transfer RNA (tRNA) molecules. The large subunit (LSU) contains the ribosomal catalytic site termed the peptidyl transferase center (PTC), which catalyzes the formation of peptide bonds, thereby polymerizing the amino acids delivered by tRNAs into a polypeptide chain. The nascent polypeptides leave the ribosome through a tunnel in the LSU and interact with protein factors that function in enzymatic processing, targeting, and the membrane insertion of nascent chains at the exit of the ribosomal tunnel. This is Small ribosomal subunit protein uS14 from Candida albicans (strain SC5314 / ATCC MYA-2876) (Yeast).